The primary structure comprises 274 residues: Kit ligand (274 aa).

Positions 1–25 (MKKTQTWIITCIYLQLLLFNPLVRT) are cleaved as a signal peptide. Q26 is modified (pyrrolidone carboxylic acid). Over 26 to 215 (QGICRNRVTD…SDSIEDSSLQ (190 aa)) the chain is Extracellular. 2 disulfide bridges follow: C29/C114 and C68/C164. N-linked (GlcNAc...) asparagine glycosylation is found at N90, N97, N145, and N196. Residues 216–238 (WAAVALPAFFSLVIGFAFGALYW) form a helical membrane-spanning segment. The Cytoplasmic portion of the chain corresponds to 239–274 (KKKQPNLTRTVENIQINEEDNEISMLQEKEREFQEV).

This sequence belongs to the SCF family. Homodimer, non-covalently linked. Heterotetramer with KIT, binding two KIT molecules; thereby mediates KIT dimerization and subsequent activation by autophosphorylation. A soluble form is produced by proteolytic processing of the extracellular domain.

The protein resides in the cytoplasm. The protein localises to the cytoskeleton. It localises to the cell membrane. It is found in the cell projection. Its subcellular location is the lamellipodium. The protein resides in the filopodium. The protein localises to the secreted. Its function is as follows. Ligand for the receptor-type protein-tyrosine kinase KIT. Plays an essential role in the regulation of cell survival and proliferation, hematopoiesis, stem cell maintenance, gametogenesis, mast cell development, migration and function, and in melanogenesis. KITLG/SCF binding can activate several signaling pathways. Promotes phosphorylation of PIK3R1, the regulatory subunit of phosphatidylinositol 3-kinase, and subsequent activation of the kinase AKT1. KITLG/SCF and KIT also transmit signals via GRB2 and activation of RAS, RAF1 and the MAP kinases MAPK1/ERK2 and/or MAPK3/ERK1. KITLG/SCF and KIT promote activation of STAT family members STAT1, STAT3 and STAT5. KITLG/SCF and KIT promote activation of PLCG1, leading to the production of the cellular signaling molecules diacylglycerol and inositol 1,4,5-trisphosphate. KITLG/SCF acts synergistically with other cytokines, probably interleukins. In Sus scrofa (Pig), this protein is Kit ligand (KITLG).